The primary structure comprises 298 residues: Protoheme IX farnesyltransferase (298 aa).

9 helical membrane passes run 26–46, 52–72, 93–113, 120–140, 148–168, 174–194, 219–239, 241–261, and 278–298; these read VVSLIVFTAVIGMFLSVPGAV, LLGTIGISLVAGAAAALNCLV, VSVPETLFFLVMVGGLGLFIL, LTMWLTLGTFVGYAIIYTVIL, IVIGGASGAMPPVLGWAAITG, ALLLFLIIFAWTPPHFWALAL, LHVLLYTIILCIATVLPYLTQ, SGLIYLVSVLILDAIFLYYAI, and YSIIYLALLFTALLVDHYFYF.

This sequence belongs to the UbiA prenyltransferase family. Protoheme IX farnesyltransferase subfamily.

It is found in the cell inner membrane. The enzyme catalyses heme b + (2E,6E)-farnesyl diphosphate + H2O = Fe(II)-heme o + diphosphate. The protein operates within porphyrin-containing compound metabolism; heme O biosynthesis; heme O from protoheme: step 1/1. Its function is as follows. Converts heme B (protoheme IX) to heme O by substitution of the vinyl group on carbon 2 of heme B porphyrin ring with a hydroxyethyl farnesyl side group. The sequence is that of Protoheme IX farnesyltransferase from Nitrosomonas eutropha (strain DSM 101675 / C91 / Nm57).